The primary structure comprises 1132 residues: Mis18-binding protein 1 (1132 aa).

A Glycyl lysine isopeptide (Lys-Gly) (interchain with G-Cter in SUMO2) cross-link involves residue Lys7. Phosphoserine is present on Ser9. Lys65 participates in a covalent cross-link: Glycyl lysine isopeptide (Lys-Gly) (interchain with G-Cter in SUMO2). A phosphoserine mark is found at Ser110, Ser131, Ser135, Ser172, and Ser192. The tract at residues 123–154 (LRDKQEQPSRNSSLLEPQKSGNNETFTPNRVE) is disordered. Positions 130 to 150 (PSRNSSLLEPQKSGNNETFTP) are enriched in polar residues. Residues Lys211 and Lys262 each participate in a glycyl lysine isopeptide (Lys-Gly) (interchain with G-Cter in SUMO2) cross-link. Ser299 bears the Phosphoserine mark. The tract at residues 306–332 (SERTTEGTSQQKVKEGNGKTVPGETGL) is disordered. Ser365 is modified (phosphoserine). The SANTA domain maps to 383 to 469 (VQLQEWMIKS…MFGFPENWKE (87 aa)). Residues 482–518 (EKNREKTKQKQKTGRSVRDIRKSMKNDARENQTDTAQ) form a disordered region. Basic and acidic residues predominate over residues 497–513 (SVRDIRKSMKNDARENQ). Glycyl lysine isopeptide (Lys-Gly) (interchain with G-Cter in SUMO2) cross-links involve residues Lys534, Lys612, Lys639, and Lys647. Residue Thr653 is modified to Phosphothreonine. Glycyl lysine isopeptide (Lys-Gly) (interchain with G-Cter in SUMO2) cross-links involve residues Lys727 and Lys742. The interval 765-798 (HQSSPDLSSEESETEKEIKRKAEVKKTKAGNTKE) is disordered. A phosphoserine mark is found at Ser772 and Ser773. The span at 779–790 (EKEIKRKAEVKK) shows a compositional bias: basic and acidic residues. Thr821 carries the phosphothreonine modification. Ser824 bears the Phosphoserine mark. A Glycyl lysine isopeptide (Lys-Gly) (interchain with G-Cter in SUMO2) cross-link involves residue Lys840. Phosphoserine is present on Ser860. One can recognise an SANT domain in the interval 875–930 (IQDKEWNEKELQKLHCAFASLPKHKPGFWSEVAAAVGSRSPEECQRKYMENPRGKG). Lys899 participates in a covalent cross-link: Glycyl lysine isopeptide (Lys-Gly) (interchain with G-Cter in SUMO2). A disordered region spans residues 923 to 957 (MENPRGKGSQKHVTKKKPANSKGQNGKRGDADQKQ). A compositionally biased stretch (basic residues) spans 930-941 (GSQKHVTKKKPA). Residues Lys956, Lys964, and Lys983 each participate in a glycyl lysine isopeptide (Lys-Gly) (interchain with G-Cter in SUMO2) cross-link. Ser1008 bears the Phosphoserine mark. Lys1079 is covalently cross-linked (Glycyl lysine isopeptide (Lys-Gly) (interchain with G-Cter in SUMO2)). Ser1086 bears the Phosphoserine mark. 2 positions are modified to phosphothreonine: Thr1087 and Thr1089. A phosphoserine mark is found at Ser1104 and Ser1116.

In terms of assembly, interacts with SP1. Interacts with MIS18A. Identified in a complex containing MIS18A, OIP5/MIS18B, MIS18BP1, RBBP7 and RBBP4. Interacts with KAT7/HBO1. Interacts (via N-terminus) with FLNA (via N-terminus).

It is found in the nucleus. Its subcellular location is the chromosome. The protein localises to the centromere. Required for recruitment of CENPA to centromeres and normal chromosome segregation during mitosis. The sequence is that of Mis18-binding protein 1 (MIS18BP1) from Homo sapiens (Human).